The following is a 372-amino-acid chain: Putative RING-H2 finger protein ATL21A (372 aa).

An N-terminal signal peptide occupies residues 1–20; that stretch reads MTFSKQLFLYLFFLFPLLHA. Residues 242–262 traverse the membrane as a helical segment; it reads IILLSIIGPLTIFATCIAVGV. An RING-type; atypical zinc finger spans residues 320 to 362; the sequence is CPICLSEYASKETVRCIPECDHCFHSECIDVWLKIHGSCPLCR.

Belongs to the RING-type zinc finger family. ATL subfamily.

The protein localises to the membrane. It catalyses the reaction S-ubiquitinyl-[E2 ubiquitin-conjugating enzyme]-L-cysteine + [acceptor protein]-L-lysine = [E2 ubiquitin-conjugating enzyme]-L-cysteine + N(6)-ubiquitinyl-[acceptor protein]-L-lysine.. It functions in the pathway protein modification; protein ubiquitination. The chain is Putative RING-H2 finger protein ATL21A (ATL21A) from Arabidopsis thaliana (Mouse-ear cress).